Reading from the N-terminus, the 142-residue chain is Large ribosomal subunit protein uL16 (142 aa).

It belongs to the universal ribosomal protein uL16 family. As to quaternary structure, part of the 50S ribosomal subunit.

In terms of biological role, binds 23S rRNA and is also seen to make contacts with the A and possibly P site tRNAs. The sequence is that of Large ribosomal subunit protein uL16 from Thermotoga neapolitana (strain ATCC 49049 / DSM 4359 / NBRC 107923 / NS-E).